Reading from the N-terminus, the 272-residue chain is Cytochrome b-c1 complex subunit Rieske-2, mitochondrial (272 aa).

Residues 1–60 constitute a mitochondrion transit peptide; that stretch reads MLRIAGRRASSLSRWPVRSVAPSSSAFISANHFSSDDDSSSPRSISPSLASVFLHHTRGF. Topologically, residues 61 to 109 are mitochondrial matrix; it reads SSNSVSHAHDMGLVPDLPPTVAAIKNPTSKIVYDEHNHERYPPGDPSKR. Residues 110 to 132 traverse the membrane as a helical segment; sequence AFAYFVLTGGRFVYASLVRLLIL. Residues 133-272 lie on the Mitochondrial intermembrane side of the membrane; that stretch reads KFVLSMSASK…FLEENKLLIG (140 aa). Positions 182–270 constitute a Rieske domain; the sequence is INLANSVDLG…YSFLEENKLL (89 aa). Positions 215, 217, 234, and 237 each coordinate [2Fe-2S] cluster. The cysteines at positions 220 and 236 are disulfide-linked.

This sequence belongs to the Rieske iron-sulfur protein family. Component of the ubiquinol-cytochrome c oxidoreductase (cytochrome b-c1 complex, complex III, CIII), a multisubunit enzyme composed of 3 respiratory subunits cytochrome b, cytochrome c1 and Rieske protein, 2 core protein subunits, and several low-molecular weight protein subunits. The complex exists as an obligatory dimer and forms supercomplexes (SCs) in the inner mitochondrial membrane with cytochrome c oxidase (complex IV, CIV). [2Fe-2S] cluster is required as a cofactor. High levels are seen in the flowers while a low level expression is seen in the roots, leaves and stems.

The protein resides in the mitochondrion inner membrane. It catalyses the reaction a quinol + 2 Fe(III)-[cytochrome c](out) = a quinone + 2 Fe(II)-[cytochrome c](out) + 2 H(+)(out). Component of the ubiquinol-cytochrome c oxidoreductase, a multisubunit transmembrane complex that is part of the mitochondrial electron transport chain which drives oxidative phosphorylation. The respiratory chain contains 3 multisubunit complexes succinate dehydrogenase (complex II, CII), ubiquinol-cytochrome c oxidoreductase (cytochrome b-c1 complex, complex III, CIII) and cytochrome c oxidase (complex IV, CIV), that cooperate to transfer electrons derived from NADH and succinate to molecular oxygen, creating an electrochemical gradient over the inner membrane that drives transmembrane transport and the ATP synthase. The cytochrome b-c1 complex catalyzes electron transfer from ubiquinol to cytochrome c, linking this redox reaction to translocation of protons across the mitochondrial inner membrane, with protons being carried across the membrane as hydrogens on the quinol. In the process called Q cycle, 2 protons are consumed from the matrix, 4 protons are released into the intermembrane space and 2 electrons are passed to cytochrome c. The Rieske protein is a catalytic core subunit containing a [2Fe-2S] iron-sulfur cluster. It cycles between 2 conformational states during catalysis to transfer electrons from the quinol bound in the Q(0) site in cytochrome b to cytochrome c1. The polypeptide is Cytochrome b-c1 complex subunit Rieske-2, mitochondrial (Nicotiana tabacum (Common tobacco)).